Here is a 428-residue protein sequence, read N- to C-terminus: Flotillin-2 (428 aa).

Residue glycine 2 is the site of N-myristoyl glycine attachment. Residue cysteine 4 is the site of S-palmitoyl cysteine; by ZDHHC5 attachment. Cysteine 19 carries S-palmitoyl cysteine lipidation. Cysteine 20 carries S-palmitoyl cysteine; by ZDHHC5 lipidation. The residue at position 405 (serine 405) is a Phosphoserine.

This sequence belongs to the band 7/mec-2 family. Flotillin subfamily. In terms of assembly, heterooligomeric complex of flotillin-1 and flotillin-2 and caveolin-1 and caveolin-2. Interacts with ECPAS. Post-translationally, ZDHHC5-catalyzed palmitoylation may be required for the formation of higher-order complexes and for neurite outgrowth in cultured neural stem cells. Expressed in many tissues, including suprabasal epidermis, hair follicles, heart, lung, thymus, spleen, liver, kidney and brain. Not expressed in skeletal muscle.

It localises to the cell membrane. The protein localises to the membrane. It is found in the caveola. The protein resides in the endosome. May act as a scaffolding protein within caveolar membranes, functionally participating in formation of caveolae or caveolae-like vesicles. May be involved in epidermal cell adhesion and epidermal structure and function. The protein is Flotillin-2 (Flot2) of Mus musculus (Mouse).